The primary structure comprises 328 residues: 7,8-didemethyl-8-hydroxy-5-deazariboflavin synthase (328 aa).

Residues 1–242 (MTYSRNIFIP…PDVSIQVPPN (242 aa)) form the Radical SAM core domain. [4Fe-4S] cluster-binding residues include C15, C19, and C22.

This sequence belongs to the radical SAM superfamily. CofG family. As to quaternary structure, consists of two subunits, CofG and CofH. Requires [4Fe-4S] cluster as cofactor.

It catalyses the reaction 5-amino-5-(4-hydroxybenzyl)-6-(D-ribitylimino)-5,6-dihydrouracil + S-adenosyl-L-methionine = 7,8-didemethyl-8-hydroxy-5-deazariboflavin + 5'-deoxyadenosine + L-methionine + NH4(+) + H(+). The protein operates within cofactor biosynthesis; coenzyme F0 biosynthesis. Its function is as follows. Catalyzes the radical-mediated synthesis of 7,8-didemethyl-8-hydroxy-5-deazariboflavin from 5-amino-5-(4-hydroxybenzyl)-6-(D-ribitylimino)-5,6-dihydrouracil. This chain is 7,8-didemethyl-8-hydroxy-5-deazariboflavin synthase, found in Methanothermobacter thermautotrophicus (strain ATCC 29096 / DSM 1053 / JCM 10044 / NBRC 100330 / Delta H) (Methanobacterium thermoautotrophicum).